We begin with the raw amino-acid sequence, 423 residues long: 3-phosphoshikimate 1-carboxyvinyltransferase (423 aa).

3 residues coordinate 3-phosphoshikimate: lysine 20, serine 21, and arginine 25. Position 20 (lysine 20) interacts with phosphoenolpyruvate. Phosphoenolpyruvate is bound by residues glycine 91 and arginine 119. 3-phosphoshikimate-binding residues include threonine 163, serine 164, glutamine 165, aspartate 305, glutamine 328, and lysine 332. Glutamine 165 provides a ligand contact to phosphoenolpyruvate. The active-site Proton acceptor is aspartate 305. Positions 336 and 377 each coordinate phosphoenolpyruvate.

Belongs to the EPSP synthase family. Monomer.

Its subcellular location is the cytoplasm. It catalyses the reaction 3-phosphoshikimate + phosphoenolpyruvate = 5-O-(1-carboxyvinyl)-3-phosphoshikimate + phosphate. It participates in metabolic intermediate biosynthesis; chorismate biosynthesis; chorismate from D-erythrose 4-phosphate and phosphoenolpyruvate: step 6/7. Catalyzes the transfer of the enolpyruvyl moiety of phosphoenolpyruvate (PEP) to the 5-hydroxyl of shikimate-3-phosphate (S3P) to produce enolpyruvyl shikimate-3-phosphate and inorganic phosphate. The protein is 3-phosphoshikimate 1-carboxyvinyltransferase of Acetivibrio thermocellus (strain ATCC 27405 / DSM 1237 / JCM 9322 / NBRC 103400 / NCIMB 10682 / NRRL B-4536 / VPI 7372) (Clostridium thermocellum).